The sequence spans 52 residues: ATP synthase protein 8 (52 aa).

A helical transmembrane segment spans residues 10-30; it reads FLMSLMIMMILIFMTINFYFF.

Belongs to the ATPase protein 8 family. In terms of assembly, F-type ATPases have 2 components, CF(1) - the catalytic core - and CF(0) - the membrane proton channel.

It is found in the mitochondrion membrane. Functionally, mitochondrial membrane ATP synthase (F(1)F(0) ATP synthase or Complex V) produces ATP from ADP in the presence of a proton gradient across the membrane which is generated by electron transport complexes of the respiratory chain. F-type ATPases consist of two structural domains, F(1) - containing the extramembraneous catalytic core and F(0) - containing the membrane proton channel, linked together by a central stalk and a peripheral stalk. During catalysis, ATP synthesis in the catalytic domain of F(1) is coupled via a rotary mechanism of the central stalk subunits to proton translocation. Part of the complex F(0) domain. Minor subunit located with subunit a in the membrane. In Rhipicephalus sanguineus (Brown dog tick), this protein is ATP synthase protein 8 (MT-ATP8).